We begin with the raw amino-acid sequence, 198 residues long: Large ribosomal subunit protein uL13B (198 aa).

Ser2 is subject to N-acetylserine; partial. Ser43 bears the Phosphoserine mark. A Glycyl lysine isopeptide (Lys-Gly) (interchain with G-Cter in ubiquitin) cross-link involves residue Lys176. Residues Ser181, Ser185, and Ser187 each carry the phosphoserine modification.

This sequence belongs to the universal ribosomal protein uL13 family. Component of the large ribosomal subunit (LSU). Mature yeast ribosomes consist of a small (40S) and a large (60S) subunit. The 40S small subunit contains 1 molecule of ribosomal RNA (18S rRNA) and 33 different proteins (encoded by 57 genes). The large 60S subunit contains 3 rRNA molecules (25S, 5.8S and 5S rRNA) and 46 different proteins (encoded by 81 genes). N-terminally acetylated by acetyltransferase NatA.

It localises to the cytoplasm. Component of the ribosome, a large ribonucleoprotein complex responsible for the synthesis of proteins in the cell. The small ribosomal subunit (SSU) binds messenger RNAs (mRNAs) and translates the encoded message by selecting cognate aminoacyl-transfer RNA (tRNA) molecules. The large subunit (LSU) contains the ribosomal catalytic site termed the peptidyl transferase center (PTC), which catalyzes the formation of peptide bonds, thereby polymerizing the amino acids delivered by tRNAs into a polypeptide chain. The nascent polypeptides leave the ribosome through a tunnel in the LSU and interact with protein factors that function in enzymatic processing, targeting, and the membrane insertion of nascent chains at the exit of the ribosomal tunnel. This Saccharomyces cerevisiae (strain ATCC 204508 / S288c) (Baker's yeast) protein is Large ribosomal subunit protein uL13B.